The sequence spans 542 residues: Exopolysaccharide phosphotransferase CpsY (542 aa).

The disordered stretch occupies residues 522 to 542 (SPTVSAPLEDGQTANPAQTAR). Over residues 533-542 (QTANPAQTAR) the composition is skewed to polar residues.

Belongs to the stealth family.

The chain is Exopolysaccharide phosphotransferase CpsY (cpsY) from Mycobacterium leprae (strain TN).